The following is a 129-amino-acid chain: Small ribosomal subunit protein uS11 (129 aa).

Belongs to the universal ribosomal protein uS11 family. As to quaternary structure, part of the 30S ribosomal subunit. Interacts with proteins S7 and S18. Binds to IF-3.

In terms of biological role, located on the platform of the 30S subunit, it bridges several disparate RNA helices of the 16S rRNA. Forms part of the Shine-Dalgarno cleft in the 70S ribosome. The polypeptide is Small ribosomal subunit protein uS11 (Francisella tularensis subsp. tularensis (strain FSC 198)).